A 250-amino-acid chain; its full sequence is UDP-2,3-diacylglucosamine hydrolase (250 aa).

Positions 7, 9, 40, 78, and 113 each coordinate Mn(2+). 78–79 contributes to the substrate binding site; that stretch reads NR. Substrate is bound by residues Asp121, Ser159, Thr163, Lys166, and His194. His194 and His196 together coordinate Mn(2+).

It belongs to the LpxH family. It depends on Mn(2+) as a cofactor.

The protein resides in the cell inner membrane. The catalysed reaction is UDP-2-N,3-O-bis[(3R)-3-hydroxytetradecanoyl]-alpha-D-glucosamine + H2O = 2-N,3-O-bis[(3R)-3-hydroxytetradecanoyl]-alpha-D-glucosaminyl 1-phosphate + UMP + 2 H(+). The protein operates within glycolipid biosynthesis; lipid IV(A) biosynthesis; lipid IV(A) from (3R)-3-hydroxytetradecanoyl-[acyl-carrier-protein] and UDP-N-acetyl-alpha-D-glucosamine: step 4/6. Functionally, hydrolyzes the pyrophosphate bond of UDP-2,3-diacylglucosamine to yield 2,3-diacylglucosamine 1-phosphate (lipid X) and UMP by catalyzing the attack of water at the alpha-P atom. Involved in the biosynthesis of lipid A, a phosphorylated glycolipid that anchors the lipopolysaccharide to the outer membrane of the cell. This is UDP-2,3-diacylglucosamine hydrolase from Pseudomonas fluorescens (strain ATCC BAA-477 / NRRL B-23932 / Pf-5).